Reading from the N-terminus, the 160-residue chain is Large ribosomal subunit protein uL15 (160 aa).

The span at 1–14 shows a compositional bias: polar residues; it reads MKLNDISDNPGSSK. The tract at residues 1–35 is disordered; the sequence is MKLNDISDNPGSSKSRMRVGRGIGSGKGKTCGRGV. A compositionally biased stretch (gly residues) spans 21-35; it reads RGIGSGKGKTCGRGV.

This sequence belongs to the universal ribosomal protein uL15 family. In terms of assembly, part of the 50S ribosomal subunit.

Its function is as follows. Binds to the 23S rRNA. The chain is Large ribosomal subunit protein uL15 from Beijerinckia indica subsp. indica (strain ATCC 9039 / DSM 1715 / NCIMB 8712).